The primary structure comprises 1202 residues: Phospholipid-transporting ATPase 10 (1202 aa).

The Cytoplasmic portion of the chain corresponds to 1 to 73; sequence MAGPSRRRRR…STKYTVASFF (73 aa). A helical membrane pass occupies residues 74 to 95; the sequence is PKSLFEQFRRVANFYFLVTGIL. At 96 to 99 the chain is on the extracellular side; the sequence is SLTD. A helical transmembrane segment spans residues 100–122; that stretch reads LSPYGAVSALLPLALVISATMVK. The Cytoplasmic segment spans residues 123 to 305; sequence EGIEDWRRKQ…SRIERTMDKI (183 aa). A helical membrane pass occupies residues 306-327; it reads IYLMFGLVFLMSFVGSIIFGVE. Topologically, residues 328–364 are extracellular; it reads TREDKVKNGRTERWYLKPDDADIFFDPERAPMAAIYH. A helical transmembrane segment spans residues 365-382; sequence FFTATMLYSYFIPISLYV. Residues 383–920 lie on the Cytoplasmic side of the membrane; sequence SIEIVKVLQS…HGHWCYSRIA (538 aa). Residue Asp-430 is the 4-aspartylphosphate intermediate of the active site. Residues Asp-865 and Asp-869 each coordinate Mg(2+). A helical membrane pass occupies residues 921–940; sequence SMICYFFYKNITFGVTVFLY. The Extracellular segment spans residues 941 to 954; the sequence is EAYTSFSGQPAYND. A helical transmembrane segment spans residues 955-974; it reads WFLSLFNVFFSSLPVIALGV. Residues 975-1004 lie on the Cytoplasmic side of the membrane; sequence FDQDVSARFCYKFPLLYQEGVQNILFSWKR. A helical membrane pass occupies residues 1005 to 1027; the sequence is IIGWMFNGFISALAIFFLCKESL. Residues 1028–1040 lie on the Extracellular side of the membrane; that stretch reads KHQLFDPDGKTAG. The helical transmembrane segment at 1041–1063 threads the bilayer; sequence REILGGTMYTCVVWVVNLQMALS. At 1064 to 1069 the chain is on the cytoplasmic side; that stretch reads ISYFTW. A helical transmembrane segment spans residues 1070–1090; that stretch reads VQHIVIWGSIAFWYIFLMIYG. The Extracellular portion of the chain corresponds to 1091–1107; the sequence is AMTPSFSTDAYMVFLEA. Residues 1108-1132 form a helical membrane-spanning segment; it reads LAPAPSYWLTTLFVMIFALIPYFVY. Residues 1133–1202 are Cytoplasmic-facing; that stretch reads KSVQMRFFPK…DQIYKDLVGV (70 aa).

Belongs to the cation transport ATPase (P-type) (TC 3.A.3) family. Type IV subfamily.

It localises to the cell membrane. It carries out the reaction ATP + H2O + phospholipidSide 1 = ADP + phosphate + phospholipidSide 2.. Its function is as follows. Involved in transport of phospholipids. This Arabidopsis thaliana (Mouse-ear cress) protein is Phospholipid-transporting ATPase 10.